A 214-amino-acid chain; its full sequence is Transcriptional regulatory protein MctR (214 aa).

Residues 8–124 (RVLLIDNHPL…EIVSAIETVA (117 aa)) enclose the Response regulatory domain. Residue Asp-59 is modified to 4-aspartylphosphate. Positions 143–208 (VEEGSDPLTP…GLIRYALDHG (66 aa)) constitute an HTH luxR-type domain. The H-T-H motif DNA-binding region spans 167 to 186 (NKEIAETLGITSATAETHRK).

It localises to the cytoplasm. Functionally, member of the two-component regulatory system MctS/MctR, which activates mctP expression. The chain is Transcriptional regulatory protein MctR from Rhizobium johnstonii (strain DSM 114642 / LMG 32736 / 3841) (Rhizobium leguminosarum bv. viciae).